A 374-amino-acid chain; its full sequence is Alanine racemase (374 aa).

Lys44 acts as the Proton acceptor; specific for D-alanine in catalysis. At Lys44 the chain carries N6-(pyridoxal phosphate)lysine. Arg139 contributes to the substrate binding site. Tyr269 (proton acceptor; specific for L-alanine) is an active-site residue. Met317 contributes to the substrate binding site.

This sequence belongs to the alanine racemase family. Pyridoxal 5'-phosphate serves as cofactor.

The catalysed reaction is L-alanine = D-alanine. Its pathway is amino-acid biosynthesis; D-alanine biosynthesis; D-alanine from L-alanine: step 1/1. Its function is as follows. Catalyzes the interconversion of L-alanine and D-alanine. May also act on other amino acids. The chain is Alanine racemase (alr) from Bordetella avium (strain 197N).